A 1267-amino-acid chain; its full sequence is DNA-directed RNA polymerase subunit beta'' (1267 aa).

Residues Cys222, Cys290, Cys297, and Cys300 each coordinate Zn(2+).

The protein belongs to the RNA polymerase beta' chain family. RpoC2 subfamily. As to quaternary structure, in plastids the minimal PEP RNA polymerase catalytic core is composed of four subunits: alpha, beta, beta', and beta''. When a (nuclear-encoded) sigma factor is associated with the core the holoenzyme is formed, which can initiate transcription. Zn(2+) serves as cofactor.

It localises to the plastid. The protein localises to the chloroplast. It carries out the reaction RNA(n) + a ribonucleoside 5'-triphosphate = RNA(n+1) + diphosphate. Functionally, DNA-dependent RNA polymerase catalyzes the transcription of DNA into RNA using the four ribonucleoside triphosphates as substrates. This Emiliania huxleyi (Coccolithophore) protein is DNA-directed RNA polymerase subunit beta''.